The primary structure comprises 214 residues: Phosphoenolpyruvate guanylyltransferase (214 aa).

Thr148, Gly163, and Ser166 together coordinate phosphoenolpyruvate.

This sequence belongs to the CofC family.

It carries out the reaction phosphoenolpyruvate + GTP + H(+) = enolpyruvoyl-2-diphospho-5'-guanosine + diphosphate. It functions in the pathway cofactor biosynthesis; coenzyme F420 biosynthesis. In terms of biological role, guanylyltransferase that catalyzes the activation of phosphoenolpyruvate (PEP) as enolpyruvoyl-2-diphospho-5'-guanosine, via the condensation of PEP with GTP. It is involved in the biosynthesis of coenzyme F420, a hydride carrier cofactor. This Mycolicibacterium gilvum (strain PYR-GCK) (Mycobacterium gilvum (strain PYR-GCK)) protein is Phosphoenolpyruvate guanylyltransferase.